Reading from the N-terminus, the 199-residue chain is MKPLLILASASPFRRALLSNAGLAFEARAAAIDERALEQPLEASGASPADVALALAEAKAKDVARYFSDALVIGSDQTMSLGTRVYHKPRDMTEAAEHLRSLSGRMHSLNSAIVLVRNDEVVWRHVSTANMTVRPLSDGFIDRHLAKVGEKALTSVGAYQLEGEGIQLFERIEGDYFTILGLPMLPLLSKLRELGAIDA.

The active-site Proton acceptor is D76.

The protein belongs to the Maf family. YceF subfamily. It depends on a divalent metal cation as a cofactor.

The protein localises to the cytoplasm. The enzyme catalyses N(7)-methyl-GTP + H2O = N(7)-methyl-GMP + diphosphate + H(+). Its function is as follows. Nucleoside triphosphate pyrophosphatase that hydrolyzes 7-methyl-GTP (m(7)GTP). May have a dual role in cell division arrest and in preventing the incorporation of modified nucleotides into cellular nucleic acids. The sequence is that of 7-methyl-GTP pyrophosphatase from Rhizobium meliloti (strain 1021) (Ensifer meliloti).